Here is a 406-residue protein sequence, read N- to C-terminus: MTYPNLLDRFLTYVKVNTRSDEHSTTTPSTQSQVDFATNVLIPEMKRVGLQNVYYLPNGFAIGTLPANDPSLTRKIGFISHMDTADFNAEGVNPQVIENYDGCVIELGNSGFKLDPADFKSLEKYPGQTLITTDGTTLLGADDKSGIAEIMTAIEYLTAHPEIKHCEIRVGFGPDEEIGVGANKFDAEDFDVDFAYTVDGGPLGELQYETFSAAGAELHFQGRNVHPGTAKGQMVNALQLAIDFHNQLPENDRPELTEGYQGFYHLMDVTGSVEEARASYIIRDFEKDAFEARKASMQSIADKMNEELGSNRVTLNLTDQYYNMKEVIEKDMTPITIAKAVMEDLGITPIIEPIRGGTDGSKISFMGIPTPNIFAGGENMHGRFEYVSLQTMERAVDTIIGIVRSL.

Histidine 81 lines the Zn(2+) pocket. Aspartate 83 is a catalytic residue. Aspartate 142 serves as a coordination point for Zn(2+). The active-site Proton acceptor is glutamate 176. Residues glutamate 177, aspartate 199, and histidine 381 each coordinate Zn(2+).

It belongs to the peptidase M20B family. Zn(2+) serves as cofactor.

It is found in the cytoplasm. It carries out the reaction Release of the N-terminal residue from a tripeptide.. In terms of biological role, cleaves the N-terminal amino acid of tripeptides. The protein is Peptidase T of Streptococcus pneumoniae serotype 2 (strain D39 / NCTC 7466).